Here is a 274-residue protein sequence, read N- to C-terminus: Rhamnulose-1-phosphate aldolase (274 aa).

Residue Glu-117 is part of the active site. 3 residues coordinate Zn(2+): His-141, His-143, and His-212.

Belongs to the aldolase class II family. RhaD subfamily. As to quaternary structure, homotetramer. Zn(2+) is required as a cofactor.

The protein resides in the cytoplasm. It carries out the reaction L-rhamnulose 1-phosphate = (S)-lactaldehyde + dihydroxyacetone phosphate. The protein operates within carbohydrate degradation; L-rhamnose degradation; glycerone phosphate from L-rhamnose: step 3/3. Functionally, catalyzes the reversible cleavage of L-rhamnulose-1-phosphate to dihydroxyacetone phosphate (DHAP) and L-lactaldehyde. This chain is Rhamnulose-1-phosphate aldolase, found in Escherichia coli O6:H1 (strain CFT073 / ATCC 700928 / UPEC).